A 354-amino-acid chain; its full sequence is Ferrochelatase (354 aa).

Fe cation is bound by residues His-214 and Glu-295.

This sequence belongs to the ferrochelatase family.

The protein resides in the cytoplasm. The catalysed reaction is heme b + 2 H(+) = protoporphyrin IX + Fe(2+). It participates in porphyrin-containing compound metabolism; protoheme biosynthesis; protoheme from protoporphyrin-IX: step 1/1. Its function is as follows. Catalyzes the ferrous insertion into protoporphyrin IX. In Burkholderia lata (strain ATCC 17760 / DSM 23089 / LMG 22485 / NCIMB 9086 / R18194 / 383), this protein is Ferrochelatase.